The primary structure comprises 171 residues: Glutamyl-tRNA(Gln) amidotransferase subunit F, mitochondrial (171 aa).

The protein belongs to the GatF family. In terms of assembly, subunit of the heterotrimeric GatFAB amidotransferase (AdT) complex, composed of A, B and F subunits.

It is found in the mitochondrion inner membrane. The enzyme catalyses L-glutamyl-tRNA(Gln) + L-glutamine + ATP + H2O = L-glutaminyl-tRNA(Gln) + L-glutamate + ADP + phosphate + H(+). Its function is as follows. Allows the formation of correctly charged Gln-tRNA(Gln) through the transamidation of misacylated Glu-tRNA(Gln) in the mitochondria. The reaction takes place in the presence of glutamine and ATP through an activated gamma-phospho-Glu-tRNA(Gln). Required for proper protein synthesis within the mitochondrion. This Zygosaccharomyces rouxii (strain ATCC 2623 / CBS 732 / NBRC 1130 / NCYC 568 / NRRL Y-229) protein is Glutamyl-tRNA(Gln) amidotransferase subunit F, mitochondrial.